The following is a 544-amino-acid chain: MGCVQCKDKEAAKLTDDRDTSLSQSGVGYRYGVDPTPQHYPAFSGTGTAVAAIPNYNNFHGAAVSQGMTVFGGISTSTHQGTLRTRGGTGVTLFVALYDYEARTEDDLSFRKGEKFQIINSTEGDWWDARSLTTGGTGYIPSNYVAPVDSIQAEDWYFGKLGRKDAERQLLSTGNPRGTFLIRESETTKGAFSLSIRDWDDVKGDHVKHYKIRKLDSGGYYITTRAQFETLQQLVQHYTERAAGLCCRLVVPCHKGMPRLTDLSVKTKDVWEIPRESLQLIKRLGNGQFGEVWMGTWNGNTKVAIKTLKPGTMSPESFLEEAQIMKKLRHDKLVQLYAVVSEEPIYIVTEYMGKGSLLDFLKDGEGRALKLPNLVDMAAQVAGGMAYIERMNYIHRDLRSANILVGDSLVCKIADFGLARLIEDNEYTARQGAKFPIKWTAPEAALYGKFTIKSDVWSFGILLTELVTKGRVPYPGMNNREVLEQVERGYRMQCPQDCPSSLHELMVQCWKKDAEERPTFEYLQAFLEDYFTATEPQYQPGDNL.

The N-myristoyl glycine moiety is linked to residue G2. 2 S-palmitoyl cysteine lipidation sites follow: C3 and C6. One can recognise an SH3 domain in the interval 89–150; the sequence is TGVTLFVALY…PSNYVAPVDS (62 aa). One can recognise an SH2 domain in the interval 156 to 253; sequence WYFGKLGRKD…GLCCRLVVPC (98 aa). In terms of domain architecture, Protein kinase spans 278–531; sequence LQLIKRLGNG…YLQAFLEDYF (254 aa). ATP is bound by residues 284-292 and K306; that span reads LGNGQFGEV. D397 functions as the Proton acceptor in the catalytic mechanism. Y427 carries the post-translational modification Phosphotyrosine; by autocatalysis. Y538 is subject to Phosphotyrosine.

Belongs to the protein kinase superfamily. Tyr protein kinase family. SRC subfamily. The cofactor is Mn(2+).

It is found in the cytoplasm. The catalysed reaction is L-tyrosyl-[protein] + ATP = O-phospho-L-tyrosyl-[protein] + ADP + H(+). With respect to regulation, inhibited by phosphorylation of Tyr-538 by leukocyte common antigen and activated by dephosphorylation of this site. Its function is as follows. Tyrosine-protein kinase implicated in the control of cell growth. Plays a role in the regulation of intracellular calcium levels. Required in brain development and mature brain function with important roles in the regulation of axon growth, axon guidance, and neurite extension. Role in CNTN1-mediated signaling. The protein is Tyrosine-protein kinase fynb (fynb) of Danio rerio (Zebrafish).